A 166-amino-acid polypeptide reads, in one-letter code: Lipoprotein signal peptidase (166 aa).

3 consecutive transmembrane segments (helical) span residues 12–32 (WLWLVVVVLIIDLGSKYLILQ), 70–90 (WFFAGIAIGICVILLVMMYRS), and 102–122 (ALIIGGALGNLFDRLWHGFVV). Residues aspartate 123 and aspartate 141 contribute to the active site. The chain crosses the membrane as a helical span at residues 137–157 (FNLADSAICIGAALIVLEGFL).

It belongs to the peptidase A8 family.

The protein localises to the cell inner membrane. It catalyses the reaction Release of signal peptides from bacterial membrane prolipoproteins. Hydrolyzes -Xaa-Yaa-Zaa-|-(S,diacylglyceryl)Cys-, in which Xaa is hydrophobic (preferably Leu), and Yaa (Ala or Ser) and Zaa (Gly or Ala) have small, neutral side chains.. The protein operates within protein modification; lipoprotein biosynthesis (signal peptide cleavage). In terms of biological role, this protein specifically catalyzes the removal of signal peptides from prolipoproteins. This is Lipoprotein signal peptidase from Salmonella choleraesuis (strain SC-B67).